Consider the following 533-residue polypeptide: D-3-phosphoglycerate dehydrogenase (533 aa).

Position 2 is an N-acetylalanine (Ala-2). Position 14 is a phosphoserine (Ser-14). Position 21 is an N6-acetyllysine; alternate (Lys-21). Lys-21 participates in a covalent cross-link: Glycyl lysine isopeptide (Lys-Gly) (interchain with G-Cter in SUMO1); alternate. Lys-21 participates in a covalent cross-link: Glycyl lysine isopeptide (Lys-Gly) (interchain with G-Cter in SUMO2); alternate. N6-acetyllysine is present on Lys-58. Residues Thr-78, Arg-155 to Ile-156, Asp-175, Thr-207, Cys-234 to Arg-236, and Asp-260 contribute to the NAD(+) site. Thr-78 carries the phosphothreonine modification. The active site involves Arg-236. Residue Glu-265 is part of the active site. His-283 (proton donor) is an active-site residue. An NAD(+)-binding site is contributed by His-283 to Ala-286.

It belongs to the D-isomer specific 2-hydroxyacid dehydrogenase family. As to quaternary structure, homotetramer.

It catalyses the reaction (2R)-3-phosphoglycerate + NAD(+) = 3-phosphooxypyruvate + NADH + H(+). The enzyme catalyses (R)-2-hydroxyglutarate + NAD(+) = 2-oxoglutarate + NADH + H(+). The catalysed reaction is (S)-malate + NAD(+) = oxaloacetate + NADH + H(+). It functions in the pathway amino-acid biosynthesis; L-serine biosynthesis; L-serine from 3-phospho-D-glycerate: step 1/3. Catalyzes the reversible oxidation of 3-phospho-D-glycerate to 3-phosphonooxypyruvate, the first step of the phosphorylated L-serine biosynthesis pathway. Also catalyzes the reversible oxidation of 2-hydroxyglutarate to 2-oxoglutarate and the reversible oxidation of (S)-malate to oxaloacetate. The chain is D-3-phosphoglycerate dehydrogenase (PHGDH) from Homo sapiens (Human).